A 280-amino-acid chain; its full sequence is Maltodextrin transport system permease protein MalD (280 aa).

6 helical membrane passes run 15–35, 77–97, 110–130, 142–162, 200–220, and 244–264; these read LTYL…LITI, LIIA…AGYA, LVFF…AFFV, WFLI…LMKG, VQAL…SFLL, and IAYF…LFFF. In terms of domain architecture, ABC transmembrane type-1 spans 73 to 265; it reads YLNTLIIALI…LPICILFFFL (193 aa).

It belongs to the binding-protein-dependent transport system permease family. MalFG subfamily.

The protein resides in the cell membrane. Part of the binding-protein-dependent transport system for maltodextrin; probably responsible for the translocation of the substrate across the membrane. The sequence is that of Maltodextrin transport system permease protein MalD (malD) from Streptococcus pneumoniae (strain ATCC BAA-255 / R6).